We begin with the raw amino-acid sequence, 270 residues long: Cbp/p300-interacting transactivator 2 (270 aa).

The disordered stretch occupies residues 138 to 201 (LHPAAGHQMN…SGGGSGSGNM (64 aa)). A compositionally biased stretch (gly residues) spans 165 to 198 (STPGGSGGSSTPGGSGSSSGGGAGSSNSGGGSGS).

It belongs to the CITED family. In terms of assembly, interacts (via C-terminus) with SMAD2. Interacts (via C-terminus) with SMAD3 (via MH2 domain). Interacts with LHX2 (via LIM domains). Interacts with WT1. Interacts (via C-terminus) with EP300 (via CH1 domain); the interaction is stimulated in response to hypoxia. Interacts with PPARA. Interacts (via C-terminus) with TFAP2A, TFAP2B and TFAP2C.

It is found in the nucleus. In terms of biological role, transcriptional coactivator of the p300/CBP-mediated transcription complex. Acts as a bridge, linking TFAP2 transcription factors and the p300/CBP transcriptional coactivator complex in order to stimulate TFAP2-mediated transcriptional activation. Positively regulates TGF-beta signaling through its association with the SMAD/p300/CBP-mediated transcriptional coactivator complex. Stimulates the peroxisome proliferator-activated receptors PPARA transcriptional activity. Enhances estrogen-dependent transactivation mediated by estrogen receptors. Also acts as a transcriptional corepressor; interferes with the binding of the transcription factors HIF1A or STAT2 and the p300/CBP transcriptional coactivator complex. Participates in sex determination and early gonad development by stimulating transcription activation of SRY. Plays a role in controlling left-right patterning during embryogenesis; potentiates transcriptional activation of NODAL-mediated gene transcription in the left lateral plate mesoderm (LPM). Plays an essential role in differentiation of the adrenal cortex from the adrenogonadal primordium (AGP); stimulates WT1-mediated transcription activation thereby up-regulating the nuclear hormone receptor NR5A1 promoter activity. Associates with chromatin to the PITX2 P1 promoter region. The polypeptide is Cbp/p300-interacting transactivator 2 (CITED2) (Homo sapiens (Human)).